The sequence spans 70 residues: Large ribosomal subunit protein eL38 (70 aa).

The protein belongs to the eukaryotic ribosomal protein eL38 family.

This Spodoptera frugiperda (Fall armyworm) protein is Large ribosomal subunit protein eL38 (RpL38).